The chain runs to 315 residues: Methionyl-tRNA formyltransferase (315 aa).

Position 113-116 (113-116 (SLLP)) interacts with (6S)-5,6,7,8-tetrahydrofolate.

It belongs to the Fmt family.

The catalysed reaction is L-methionyl-tRNA(fMet) + (6R)-10-formyltetrahydrofolate = N-formyl-L-methionyl-tRNA(fMet) + (6S)-5,6,7,8-tetrahydrofolate + H(+). Its function is as follows. Attaches a formyl group to the free amino group of methionyl-tRNA(fMet). The formyl group appears to play a dual role in the initiator identity of N-formylmethionyl-tRNA by promoting its recognition by IF2 and preventing the misappropriation of this tRNA by the elongation apparatus. This is Methionyl-tRNA formyltransferase from Escherichia coli O17:K52:H18 (strain UMN026 / ExPEC).